The following is a 141-amino-acid chain: Probable trafficking protein particle complex subunit 2 (141 aa).

It belongs to the TRAPP small subunits family. Sedlin subfamily. As to quaternary structure, part of the multisubunit TRAPP (transport protein particle) complex.

Its subcellular location is the cytoplasm. It is found in the perinuclear region. The protein localises to the endoplasmic reticulum. It localises to the golgi apparatus. May play a role in vesicular transport from endoplasmic reticulum to Golgi. Required for the systemic spread of the RNAi response. The chain is Probable trafficking protein particle complex subunit 2 (sedl-1) from Caenorhabditis elegans.